The chain runs to 128 residues: Anion exchange transporter (128 aa).

At 1–14 the chain is on the extracellular side; sequence LFSFKELNEQFKRK. A helical membrane pass occupies residues 15 to 35; sequence IKVVLPVDLVLIIAASFACYC. Topologically, residues 36-66 are cytoplasmic; that stretch reads TNMENTYGLEVVGHIPRGIPPPRAPPMNILS. The chain crosses the membrane as a helical span at residues 67-87; the sequence is AVITEAFGVALVGYAASLALA. The Extracellular segment spans residues 88–103; that stretch reads QGSAKKFKYSVDDNQE. A helical transmembrane segment spans residues 104–124; sequence FLAHGLSNVISSFLFCIPSAA. Residues 125–128 lie on the Cytoplasmic side of the membrane; the sequence is AMGR.

Belongs to the SLC26A/SulP transporter (TC 2.A.53) family. Expressed in gastric epithelium, predominantly in the gastric parietal cells but also at lower levels in mucosal cells.

The protein resides in the basolateral cell membrane. It is found in the recycling endosome membrane. Its subcellular location is the apical cell membrane. It localises to the lateral cell membrane. It carries out the reaction chloride(in) = chloride(out). The enzyme catalyses iodide(out) = iodide(in). The catalysed reaction is bromide(in) = bromide(out). It catalyses the reaction oxalate(in) = oxalate(out). It carries out the reaction nitrate(in) = nitrate(out). The enzyme catalyses sulfate(in) = sulfate(out). The catalysed reaction is D-gluconate(in) = D-gluconate(out). It catalyses the reaction thiocyanate(in) = thiocyanate(out). It carries out the reaction hydrogencarbonate(in) = hydrogencarbonate(out). The enzyme catalyses hydrogencarbonate(in) + chloride(out) = hydrogencarbonate(out) + chloride(in). Acts as an anion channel mediating the transport of chloride, bromide, iodide, nitrate, sulfate, gluconate, thiocyanate, oxalate and bicarbonate ions. Its permeability towards bicarbonate is weak and increases when pH is above 7. Mediates thiocyanate transport in retinal pigment epithelium cells. Mediates iodide transport in the thyroid gland, playing an important role in the synthesis of thyroid hormones and the maintenance of thyroid function. In Oryctolagus cuniculus (Rabbit), this protein is Anion exchange transporter.